Here is an 894-residue protein sequence, read N- to C-terminus: Histone-lysine N-methyltransferase PRDM9 (894 aa).

2 disordered regions span residues 1 to 23 and 143 to 174; these read MSPEKSQEESPEEDTERTERKPM and SGSEQAQKPVSPSGEASTSGQHSRLKLELRKK. The KRAB-related domain maps to 23-86; sequence MVKDAFKDIS…RRQAIKLQVD (64 aa). Over residues 143–164 the composition is skewed to polar residues; the sequence is SGSEQAQKPVSPSGEASTSGQH. Zn(2+)-binding residues include Cys205, Cys208, Cys216, and His219. The 115-residue stretch at 244–358 folds into the SET domain; that stretch reads PGLRIGPSGI…PGCELLVWYG (115 aa). Residues 256-258, Tyr291, and 320-321 each bind S-adenosyl-L-methionine; these read AGL and NC. 288 to 294 is a binding site for substrate; sequence NNGYSWL. Residue Tyr357 participates in substrate binding. At Lys368 the chain carries N6,N6,N6-trimethyllysine; alternate. N6-methyllysine; alternate is present on Lys368. Residues Lys372 and Lys374 each carry the N6-methyllysine modification. A C2H2-type 1 zinc finger spans residues 388-411; it reads HPCPSCCLAFSSQKFLSQHVERNH. 4 residues coordinate Zn(2+): Cys390, Cys393, His406, and His411. The segment at 408 to 469 is disordered; that stretch reads ERNHSSQNFP…SKLLNKRTWQ (62 aa). Over residues 444–461 the composition is skewed to basic and acidic residues; sequence PHSRNDKTKGQEIKERSK. The segment at 524-546 adopts a C2H2-type 2; degenerate zinc-finger fold; it reads VKYGECGQGFSVKSDVITHQRTH. 12 C2H2-type zinc fingers span residues 552–574, 580–602, 608–630, 636–658, 664–686, 692–714, 720–742, 748–770, 776–798, 804–826, 832–854, and 860–882; these read YVCRECGRGFSWKSHLLIHQRIH, YVCRECGRGFSWQSVLLTHQRTH, YVCRECGRGFSRQSVLLTHQRRH, YVCRECGRGFSNKSHLLRHQRTH, YVCRECGRGFRDKSHLLRHQRTH, YVCRECGRGFRDKSNLLSHQRTH, YVCRECGRGFRNKSHLLRHQRTH, and YVCRECGRGFSDRSSLCYHQRTH. Zn(2+) contacts are provided by Cys722, Cys725, His738, His742, Cys750, Cys753, His766, His770, Cys778, Cys781, His794, His798, Cys806, Cys809, His822, and His826. A DNA-binding region spans residues 730 to 820; the sequence is SNKSHLLRHQ…RGFSNKSHLL (91 aa).

This sequence belongs to the class V-like SAM-binding methyltransferase superfamily. As to quaternary structure, homodimer. Interacts with EHMT2 and CDYL; interaction only takes place when PRDM9 is bound to hotspot DNA. Interacts with CXXC1; this interaction does not link PRDM9-activated recombination hotspot sites with DSB machinery and is not required for the hotspot recognition pathway. Forms a complex with EWSR1, REC8, SYCP3 and SYCP1; complex formation is dependent of phosphorylated form of REC8 and requires PRDM9 bound to hotspot DNA; EWSR1 joins PRDM9 with the chromosomal axis through REC8. Post-translationally, mono-methylated; automethylated. Tri-methylated; automethylated. Mono-methylation is predominant; automethylation is lower and slower than H3 peptide methylation and is in a highest S-adenosyl-L-methionine concentration-dependent. There are two major sites for automethylation at Lys-368 and Lys-374. Lysines can be simultaneously methylated, such as Lys-368(me3)/Lys-372(me1), Lys-368(me1)/Lys-374(me1) and Lys-368(me1)/Lys-372(me1)/Lys-374(me1). Automethylation is an intramolecular (cis) process.

It is found in the nucleus. The protein resides in the chromosome. The catalysed reaction is L-lysyl-[protein] + S-adenosyl-L-methionine = N(6)-methyl-L-lysyl-[protein] + S-adenosyl-L-homocysteine + H(+). It carries out the reaction N(6)-methyl-L-lysyl-[protein] + S-adenosyl-L-methionine = N(6),N(6)-dimethyl-L-lysyl-[protein] + S-adenosyl-L-homocysteine + H(+). It catalyses the reaction L-lysyl(4)-[histone H3] + 3 S-adenosyl-L-methionine = N(6),N(6),N(6)-trimethyl-L-lysyl(4)-[histone H3] + 3 S-adenosyl-L-homocysteine + 3 H(+). The enzyme catalyses L-lysyl(36)-[histone H3] + 3 S-adenosyl-L-methionine = N(6),N(6),N(6)-trimethyl-L-lysyl(36)-[histone H3] + 3 S-adenosyl-L-homocysteine + 3 H(+). The catalysed reaction is L-lysyl(9)-[histone H3] + 3 S-adenosyl-L-methionine = N(6),N(6),N(6)-trimethyl-L-lysyl(9)-[histone H3] + 3 S-adenosyl-L-homocysteine + 3 H(+). It carries out the reaction L-lysyl(20)-[histone H4] + S-adenosyl-L-methionine = N(6)-methyl-L-lysyl(20)-[histone H4] + S-adenosyl-L-homocysteine + H(+). It catalyses the reaction N(6)-methyl-L-lysyl(20)-[histone H4] + S-adenosyl-L-methionine = N(6),N(6)-dimethyl-L-lysyl(20)-[histone H4] + S-adenosyl-L-homocysteine + H(+). Its activity is regulated as follows. Inhibited by suramin with an IC(50) of 4.1 uM. In terms of biological role, histone methyltransferase that sequentially mono-, di-, and tri-methylates both 'Lys-4' (H3K4) and 'Lys-36' (H3K36) of histone H3 to produce respectively trimethylated 'Lys-4' (H3K4me3) and trimethylated 'Lys-36' (H3K36me3) histone H3 and plays a key role in meiotic prophase by determining hotspot localization thereby promoting meiotic recombination. Can also methylate all four core histones with H3 being the best substrate and the most highly modified. Is also able, on one hand, to mono and di-methylate H4K20 and on other hand to trimethylate H3K9 with the di-methylated H3K9 as the best substrate. During meiotic prophase, binds specific DNA sequences through its zinc finger domains thereby determining hotspot localization where it promotes local H3K4me3 and H3K36me3 enrichment on the same nucleosomes through its histone methyltransferase activity. Thereby promotes double-stranded breaks (DSB) formation, at this subset of PRDM9-binding sites, that initiates meiotic recombination for the proper meiotic progression. During meiotic progression hotspot-bound PRDM9 interacts with several complexes; in early leptonema binds CDYL and EHMT2 followed by EWSR1 and CXXC1 by the end of leptonema. EWSR1 joins PRDM9 with the chromosomal axis through REC8. In this way, controls the DSB repair pathway, pairing of homologous chromosomes and sex body formation. Moreover plays a central role in the transcriptional activation of genes during early meiotic prophase thanks to H3K4me3 and H3K36me3 enrichment that represents a specific tag for epigenetic transcriptional activation. In addition performs automethylation. Acetylation and phosphorylation of histone H3 attenuate or prevent histone H3 methylation. The sequence is that of Histone-lysine N-methyltransferase PRDM9 from Homo sapiens (Human).